We begin with the raw amino-acid sequence, 254 residues long: tRNA pseudouridine synthase A (254 aa).

Asp52 serves as the catalytic Nucleophile. Tyr110 contributes to the substrate binding site.

It belongs to the tRNA pseudouridine synthase TruA family. As to quaternary structure, homodimer.

The catalysed reaction is uridine(38/39/40) in tRNA = pseudouridine(38/39/40) in tRNA. Its function is as follows. Formation of pseudouridine at positions 38, 39 and 40 in the anticodon stem and loop of transfer RNAs. The polypeptide is tRNA pseudouridine synthase A (Thermodesulfovibrio yellowstonii (strain ATCC 51303 / DSM 11347 / YP87)).